Here is a 159-residue protein sequence, read N- to C-terminus: Dihydrofolate reductase (159 aa).

The DHFR domain occupies 2–157; the sequence is TLSILVAHDL…IPHTFLHLIR (156 aa). 6-8 is a substrate binding site; it reads LVA. Residues 7–8 and 15–20 each bind NADP(+); these read VA and IGFENQ. Substrate is bound at residue D28. 44–47 contributes to the NADP(+) binding site; the sequence is GRKT. A substrate-binding site is contributed by R58. Residues 63 to 66 and 93 to 98 each bind NADP(+); these read LTSD and FGGQTL. Substrate is bound at residue T112.

Belongs to the dihydrofolate reductase family.

The catalysed reaction is (6S)-5,6,7,8-tetrahydrofolate + NADP(+) = 7,8-dihydrofolate + NADPH + H(+). It participates in cofactor biosynthesis; tetrahydrofolate biosynthesis; 5,6,7,8-tetrahydrofolate from 7,8-dihydrofolate: step 1/1. Key enzyme in folate metabolism. Catalyzes an essential reaction for de novo glycine and purine synthesis, and for DNA precursor synthesis. The polypeptide is Dihydrofolate reductase (folA) (Staphylococcus aureus (strain COL)).